Consider the following 149-residue polypeptide: Large ribosomal subunit protein bL9 (149 aa).

The protein belongs to the bacterial ribosomal protein bL9 family.

In terms of biological role, binds to the 23S rRNA. In Helicobacter pylori (strain P12), this protein is Large ribosomal subunit protein bL9.